The primary structure comprises 232 residues: 5'-methylthioadenosine/S-adenosylhomocysteine nucleosidase (232 aa).

Glu-12 acts as the Proton acceptor in catalysis. Substrate-binding positions include Gly-78, Ile-152, and 173 to 174; that span reads ME. Asp-197 serves as the catalytic Proton donor.

Belongs to the PNP/UDP phosphorylase family. MtnN subfamily. In terms of assembly, homodimer.

It catalyses the reaction S-adenosyl-L-homocysteine + H2O = S-(5-deoxy-D-ribos-5-yl)-L-homocysteine + adenine. It carries out the reaction S-methyl-5'-thioadenosine + H2O = 5-(methylsulfanyl)-D-ribose + adenine. The catalysed reaction is 5'-deoxyadenosine + H2O = 5-deoxy-D-ribose + adenine. It participates in amino-acid biosynthesis; L-methionine biosynthesis via salvage pathway; S-methyl-5-thio-alpha-D-ribose 1-phosphate from S-methyl-5'-thioadenosine (hydrolase route): step 1/2. In terms of biological role, catalyzes the irreversible cleavage of the glycosidic bond in both 5'-methylthioadenosine (MTA) and S-adenosylhomocysteine (SAH/AdoHcy) to adenine and the corresponding thioribose, 5'-methylthioribose and S-ribosylhomocysteine, respectively. Also cleaves 5'-deoxyadenosine, a toxic by-product of radical S-adenosylmethionine (SAM) enzymes, into 5-deoxyribose and adenine. Thus, is required for in vivo function of the radical SAM enzymes biotin synthase and lipoic acid synthase, that are inhibited by 5'-deoxyadenosine accumulation. This is 5'-methylthioadenosine/S-adenosylhomocysteine nucleosidase from Pectobacterium carotovorum subsp. carotovorum (strain PC1).